The following is a 244-amino-acid chain: uncharacterized protein (244 aa).

2 stretches are compositionally biased toward basic and acidic residues: residues 1–10 (MNDPFARMET) and 100–127 (GTRG…HGEE). Disordered regions lie at residues 1–79 (MNDP…GEEL), 100–130 (GTRG…EPNY), and 219–244 (TGAS…EIKL).

This is an uncharacterized protein from Homo sapiens (Human).